The following is a 149-amino-acid chain: Large ribosomal subunit protein bL9 (149 aa).

Belongs to the bacterial ribosomal protein bL9 family.

Binds to the 23S rRNA. The polypeptide is Large ribosomal subunit protein bL9 (Vibrio vulnificus (strain CMCP6)).